The primary structure comprises 906 residues: Alanine--tRNA ligase (906 aa).

His600, His604, Cys703, and His707 together coordinate Zn(2+).

The protein belongs to the class-II aminoacyl-tRNA synthetase family. As to quaternary structure, homodimer. It depends on Zn(2+) as a cofactor.

It is found in the cytoplasm. The enzyme catalyses tRNA(Ala) + L-alanine + ATP = L-alanyl-tRNA(Ala) + AMP + diphosphate. In terms of biological role, catalyzes the attachment of alanine to tRNA(Ala) in a two-step reaction: alanine is first activated by ATP to form Ala-AMP and then transferred to the acceptor end of tRNA(Ala). Incorrectly charged aminoacyl-tRNA(Ala) is also edited in situ by the editing domain. This Archaeoglobus fulgidus (strain ATCC 49558 / DSM 4304 / JCM 9628 / NBRC 100126 / VC-16) protein is Alanine--tRNA ligase (alaS).